The following is a 65-amino-acid chain: MPKMKTKSGAKKRFRVRPGGTVKRGQAFKRHILTKKTTKNKRQLRGSVGVHDTNMVSVRAMMPNA.

Over residues M1–V16 the composition is skewed to basic residues. The segment at M1–G25 is disordered.

Belongs to the bacterial ribosomal protein bL35 family.

This Herminiimonas arsenicoxydans protein is Large ribosomal subunit protein bL35.